Reading from the N-terminus, the 157-residue chain is Protein Smg (157 aa).

The protein belongs to the Smg family.

This Yersinia pseudotuberculosis serotype O:1b (strain IP 31758) protein is Protein Smg.